A 562-amino-acid polypeptide reads, in one-letter code: Gut esterase 1 (562 aa).

The N-terminal stretch at Met-1–Ala-16 is a signal peptide. Asn-73 is a glycosylation site (N-linked (GlcNAc...) asparagine; atypical). Residues Cys-75 and Cys-93 are joined by a disulfide bond. The active-site Acyl-ester intermediate is the Ser-198. A disulfide bridge links Cys-250 with Cys-258. Residues Glu-319 and His-452 each act as charge relay system in the active site. The Prevents secretion from ER signature appears at Lys-559–Leu-562.

It belongs to the type-B carboxylesterase/lipase family. In terms of tissue distribution, expressed only in the intestine.

It localises to the endoplasmic reticulum lumen. The catalysed reaction is a carboxylic ester + H2O = an alcohol + a carboxylate + H(+). This chain is Gut esterase 1 (ges-1), found in Caenorhabditis elegans.